The primary structure comprises 441 residues: Peroxisome proliferator-activated receptor delta (441 aa).

The segment at 1-58 (MEQPPGEAAEVREEEEKKEVAEAEGAPELNGGPERSLPSSSYTDLSRSSSPPSLLDQL) is disordered. A compositionally biased stretch (basic and acidic residues) spans 9–21 (AEVREEEEKKEVA). Residues 36–55 (SLPSSSYTDLSRSSSPPSLL) are compositionally biased toward low complexity. The nuclear receptor DNA-binding region spans 70–145 (LNMECRVCGD…LGMSHNAIRF (76 aa)). 2 consecutive NR C4-type zinc fingers follow at residues 74–94 (CRVCGDKASGFHYGVHACEGC) and 111–133 (CERICKIQKKNRNKCQYCRFQKC). Residues 211–439 (FVIHDIETLW…HPLLQEIYKD (229 aa)) form the NR LBD domain.

The protein belongs to the nuclear hormone receptor family. NR1 subfamily. As to quaternary structure, heterodimer with the retinoid X receptor. Interacts (via domain NR LBD) with CRY1 and CRY2 in a ligand-dependent manner. 'Lys-48'-linked polyubiquitinated; leading to proteasomal degradation. Deubiquitinated and stabilized by OTUD3.

Its subcellular location is the nucleus. Ligand-activated transcription factor key mediator of energy metabolism in adipose tissues. Receptor that binds peroxisome proliferators such as hypolipidemic drugs and fatty acids. Has a preference for poly-unsaturated fatty acids, such as gamma-linoleic acid and eicosapentanoic acid. Once activated by a ligand, the receptor binds to promoter elements of target genes. Regulates the peroxisomal beta-oxidation pathway of fatty acids. Functions as a transcription activator for the acyl-CoA oxidase gene. Decreases expression of NPC1L1 once activated by a ligand. In Canis lupus familiaris (Dog), this protein is Peroxisome proliferator-activated receptor delta (PPARD).